A 412-amino-acid polypeptide reads, in one-letter code: 1-deoxy-D-xylulose 5-phosphate reductoisomerase (412 aa).

Thr5, Gly6, Ser7, Ile8, Gly31, Asn33, and Asn125 together coordinate NADPH. Lys126 contributes to the 1-deoxy-D-xylulose 5-phosphate binding site. Residue Glu127 participates in NADPH binding. Asp151 lines the Mn(2+) pocket. 4 residues coordinate 1-deoxy-D-xylulose 5-phosphate: Ser152, Glu153, Ser189, and His212. Glu153 is a Mn(2+) binding site. Gly218 is an NADPH binding site. Positions 225, 230, 231, and 234 each coordinate 1-deoxy-D-xylulose 5-phosphate. Glu234 lines the Mn(2+) pocket.

This sequence belongs to the DXR family. Mg(2+) serves as cofactor. Mn(2+) is required as a cofactor.

The catalysed reaction is 2-C-methyl-D-erythritol 4-phosphate + NADP(+) = 1-deoxy-D-xylulose 5-phosphate + NADPH + H(+). Its pathway is isoprenoid biosynthesis; isopentenyl diphosphate biosynthesis via DXP pathway; isopentenyl diphosphate from 1-deoxy-D-xylulose 5-phosphate: step 1/6. Catalyzes the NADPH-dependent rearrangement and reduction of 1-deoxy-D-xylulose-5-phosphate (DXP) to 2-C-methyl-D-erythritol 4-phosphate (MEP). This Prochlorococcus marinus (strain MIT 9313) protein is 1-deoxy-D-xylulose 5-phosphate reductoisomerase.